Reading from the N-terminus, the 510-residue chain is 2,3-bisphosphoglycerate-independent phosphoglycerate mutase (510 aa).

The Mn(2+) site is built by Asp13 and Ser63. Catalysis depends on Ser63, which acts as the Phosphoserine intermediate. Substrate contacts are provided by residues His124, 154–155 (RD), Arg186, Arg192, 262–265 (RADR), and Lys334. Asp401, His405, Asp442, His443, and His461 together coordinate Mn(2+).

It belongs to the BPG-independent phosphoglycerate mutase family. Monomer. Mn(2+) serves as cofactor.

It carries out the reaction (2R)-2-phosphoglycerate = (2R)-3-phosphoglycerate. The protein operates within carbohydrate degradation; glycolysis; pyruvate from D-glyceraldehyde 3-phosphate: step 3/5. Catalyzes the interconversion of 2-phosphoglycerate and 3-phosphoglycerate. This Vibrio cholerae serotype O1 (strain ATCC 39541 / Classical Ogawa 395 / O395) protein is 2,3-bisphosphoglycerate-independent phosphoglycerate mutase.